The following is a 120-amino-acid chain: MVYDFKAEIVKAKNSGSHHWLLQRVTGIILALCSIWLIYFTLTNKNNDINIIMWELKKPFNVVALLITVAISLYHAMLGMRVVIEDYVSCHKLRNTLIVIVQLFCIVTIAAFVVAMFYRG.

Residues M1–H19 lie on the Cytoplasmic side of the membrane. A helical transmembrane segment spans residues W20–F40. The Periplasmic segment spans residues T41 to V62. The helical transmembrane segment at V63–I84 threads the bilayer. H75 lines the heme pocket. At E85 to R94 the chain is on the cytoplasmic side. Y87 contributes to the a ubiquinone binding site. A helical membrane pass occupies residues N95–Y118.

As to quaternary structure, part of an enzyme complex containing four subunits: a flavoprotein, an iron-sulfur protein, plus two membrane-anchoring proteins, SdhC and SdhD. It depends on heme as a cofactor.

The protein localises to the cell inner membrane. The protein operates within carbohydrate metabolism; tricarboxylic acid cycle. In terms of biological role, membrane-anchoring subunit of succinate dehydrogenase (SDH). This chain is Succinate dehydrogenase hydrophobic membrane anchor subunit (sdhD), found in Rickettsia felis (strain ATCC VR-1525 / URRWXCal2) (Rickettsia azadi).